The chain runs to 191 residues: Protein hugin (191 aa).

The first 24 residues, 1–24 (MCGPSYCTLLLIAASCYILVCSHA), serve as a signal peptide directing secretion. Residues 25-119 (KSLQGTSKLD…LTYYLLLQKL (95 aa)) constitute a propeptide that is removed on maturation. Residues L137 and L181 each carry the leucine amide modification. Positions 185–191 (AQVCGGD) are excised as a propeptide.

It belongs to the pyrokinin family. In terms of tissue distribution, expressed in a subgroup of neurosecretory cells in the subesophageal ganglion from embryonic stage 9 to larval stages.

Its subcellular location is the secreted. Its function is as follows. Probably has a role in larval molting. This chain is Protein hugin (Hug), found in Drosophila melanogaster (Fruit fly).